A 320-amino-acid polypeptide reads, in one-letter code: Ferrochelatase (320 aa).

Positions 194 and 275 each coordinate Fe cation.

The protein belongs to the ferrochelatase family.

Its subcellular location is the cytoplasm. It carries out the reaction heme b + 2 H(+) = protoporphyrin IX + Fe(2+). Its pathway is porphyrin-containing compound metabolism; protoheme biosynthesis; protoheme from protoporphyrin-IX: step 1/1. Functionally, catalyzes the ferrous insertion into protoporphyrin IX. In Stenotrophomonas maltophilia (strain R551-3), this protein is Ferrochelatase.